A 472-amino-acid polypeptide reads, in one-letter code: Serine/threonine-protein kinase sax-1 (472 aa).

In terms of domain architecture, Protein kinase spans 87-381 (FESLKVIGRG…LDEIKQCPFF (295 aa)). ATP contacts are provided by residues 93 to 101 (IGRGAFGEV) and Lys116. Asp210 acts as the Proton acceptor in catalysis. The AGC-kinase C-terminal domain maps to 382–452 (RRIDWNHIRE…KRFDGLTQKM (71 aa)).

This sequence belongs to the protein kinase superfamily. AGC Ser/Thr protein kinase family. It depends on Mg(2+) as a cofactor.

It localises to the cytoplasm. The protein resides in the nucleus. The catalysed reaction is L-seryl-[protein] + ATP = O-phospho-L-seryl-[protein] + ADP + H(+). It carries out the reaction L-threonyl-[protein] + ATP = O-phospho-L-threonyl-[protein] + ADP + H(+). Acts with sax-2 to restrict the growth of both primary and secondary neurites. Regulates mechanosensory tiling by controlling the termination point of sensory dendrites. This Caenorhabditis briggsae protein is Serine/threonine-protein kinase sax-1.